Here is a 494-residue protein sequence, read N- to C-terminus: Protein DETOXIFICATION 23 (494 aa).

Positions 1–25 (MARREGEVTETLLKKSTENRGEDRD) are disordered. The next 12 helical transmembrane spans lie at 40-60 (LWVV…LSLI), 74-94 (AAYS…LLGM), 123-143 (IVLT…GPIL), 158-178 (IIAL…TCQM), 188-208 (IIAY…WLLV), 223-243 (LVAH…GGCT), 268-288 (GGMI…TGNL), 297-317 (ALAI…GFMA), 340-360 (MVVV…FLFL), 384-404 (LLAF…VAVG), 416-436 (LACY…VVGL), and 441-461 (VWLG…VMTM).

This sequence belongs to the multi antimicrobial extrusion (MATE) (TC 2.A.66.1) family.

The protein localises to the membrane. This Arabidopsis thaliana (Mouse-ear cress) protein is Protein DETOXIFICATION 23.